Here is a 257-residue protein sequence, read N- to C-terminus: Anamorsin homolog (257 aa).

The interval 1–134 is N-terminal SAM-like domain; sequence MSDRKNVLFV…KVGSSDKVTL (134 aa). The interval 135 to 168 is linker; the sequence is NPEMKENVVSAWKLDDNNSETISEDDLLEADDLI. [2Fe-2S] cluster contacts are provided by C178, C187, C190, and C192. A fe-S binding site A region spans residues 178 to 192; sequence CATTKKAKACKDCSC. [4Fe-4S] cluster contacts are provided by C218, C221, C229, and C232. 2 short sequence motifs (cx2C motif) span residues 218-221 and 229-232; these read CGSC and CASC. Positions 218–232 are fe-S binding site B; it reads CGSCYLGDAFRCASC.

It belongs to the anamorsin family. Monomer. Requires [2Fe-2S] cluster as cofactor. [4Fe-4S] cluster serves as cofactor.

The protein resides in the cytoplasm. It localises to the mitochondrion intermembrane space. In terms of biological role, component of the cytosolic iron-sulfur (Fe-S) protein assembly (CIA) machinery. Required for the maturation of extramitochondrial Fe-S proteins. Part of an electron transfer chain functioning in an early step of cytosolic Fe-S biogenesis, facilitating the de novo assembly of a [4Fe-4S] cluster on the cytosolic Fe-S scaffold complex. Electrons are transferred from NADPH via a FAD- and FMN-containing diflavin oxidoreductase. Together with the diflavin oxidoreductase, also required for the assembly of the diferric tyrosyl radical cofactor of ribonucleotide reductase (RNR), probably by providing electrons for reduction during radical cofactor maturation in the catalytic small subunit. In Acyrthosiphon pisum (Pea aphid), this protein is Anamorsin homolog.